The primary structure comprises 466 residues: MAEAEGVPTTPGPASGSTFRGRRDVSGSWERDQQVEAAQRALVEVLGPYEPLLSRVQAALVWERPARSALWCLGLNAAFWFFALTSLRLVFLLAFGLMIIVCIDQWKNKIWPEIKVPRPDALDNESWGFVHPRLLSVPELCHHVAEVWVSGTIFIRNVLLFKKQNPGKFCLLSCGILTFLAVLGRYVPGLLLSYLMLVTVMMWPLAVYHRLWDRAYVRLKPALQRLDFSVRGYMMSKQRERQLRRRALHPERAMDNHSDSEEELAAFCPQLDDSTVARELAITDSEHSDAEVSCTDNGTFNLSRGQTPLTEGSEDLDGHSDPEESFARDLPDFPSINMDPAGLDDEDDTSIGMPSLMYRSPPGAEEPQAPPASRDEAALPELLLGALPVGSNLTSNLASLVSQGMIQLALSGASQPGPSGAPAQRATRGFLRSPSSDLDTDAEGDDFELLDQSELSQLDPASSRSH.

The tract at residues 1–28 is disordered; sequence MAEAEGVPTTPGPASGSTFRGRRDVSGS. Alanine 2 is subject to N-acetylalanine. Residues 2-80 lie on the Cytoplasmic side of the membrane; that stretch reads AEAEGVPTTP…WCLGLNAAFW (79 aa). Residue threonine 10 is modified to Phosphothreonine. Serine 26 is modified (phosphoserine). Residues 81–101 traverse the membrane as a helical segment; that stretch reads FFALTSLRLVFLLAFGLMIIV. Over 102 to 163 the chain is Lumenal; that stretch reads CIDQWKNKIW…FIRNVLLFKK (62 aa). A helical transmembrane segment spans residues 164–184; that stretch reads QNPGKFCLLSCGILTFLAVLG. The Cytoplasmic segment spans residues 185–186; sequence RY. The chain crosses the membrane as a helical span at residues 187–207; sequence VPGLLLSYLMLVTVMMWPLAV. Over 208–381 the chain is Lumenal; that stretch reads YHRLWDRAYV…ASRDEAALPE (174 aa). 2 positions are modified to phosphoserine: serine 258 and serine 260. Residue threonine 283 is modified to Phosphothreonine. Residues 284-374 are disordered; it reads DSEHSDAEVS…EEPQAPPASR (91 aa). Phosphoserine is present on residues serine 285, serine 288, serine 293, and serine 303. A compositionally biased stretch (polar residues) spans 294 to 310; that stretch reads CTDNGTFNLSRGQTPLT. Phosphothreonine is present on residues threonine 307 and threonine 310. 3 positions are modified to phosphoserine: serine 313, serine 320, and serine 360. The segment covering 316–331 has biased composition (basic and acidic residues); it reads LDGHSDPEESFARDLP. A helical membrane pass occupies residues 382-402; it reads LLLGALPVGSNLTSNLASLVS. The Cytoplasmic portion of the chain corresponds to 403 to 466; that stretch reads QGMIQLALSG…QLDPASSRSH (64 aa). The disordered stretch occupies residues 412–466; the sequence is GASQPGPSGAPAQRATRGFLRSPSSDLDTDAEGDDFELLDQSELSQLDPASSRSH. Residues 438–451 are compositionally biased toward acidic residues; it reads LDTDAEGDDFELLD. Position 440 is a phosphothreonine (threonine 440). The short motif at 445-450 is the LIR motif element; that stretch reads DDFELL. Positions 453–466 are enriched in polar residues; it reads SELSQLDPASSRSH.

This sequence belongs to the RETREG family. As to quaternary structure, interacts with ATG8 family modifier proteins MAP1LC3A, MAP1LC3B, MAP1LC3C, GABARAP, GABARAPL1 and GABARAPL2. Interacts with CANX. Interacts with RTN4 isoform B.

The protein localises to the endoplasmic reticulum membrane. Endoplasmic reticulum (ER)-anchored autophagy regulator which exists in an inactive state under basal conditions but is activated following cellular stress. When activated, induces ER fragmentation and mediates ER delivery into lysosomes through sequestration into autophagosomes via interaction with ATG8 family proteins. Promotes ER membrane curvature and ER tubulation required for subsequent ER fragmentation and engulfment into autophagosomes. Required for collagen quality control in a LIR motif-dependent manner. Mediates NRF1-enhanced neurite outgrowth. In Homo sapiens (Human), this protein is Reticulophagy regulator 3.